A 508-amino-acid chain; its full sequence is Zinc finger CCCH-type with G patch domain-containing protein (508 aa).

Residues 154–177 (PCNYYLEGECRFDETRCRYSHGAL) form a C3H1-type zinc finger. The interval 253-279 (DDELSSDSEETNETDGSDAANESDMDD) is disordered. In terms of domain architecture, G-patch spans 309 to 355 (TRGIGSKLMASMGYIHGTGLGSDGRGIVTPVSAQILPQGRSLDACME). Over residues 486 to 495 (QAQESSLSKE) the composition is skewed to polar residues. Positions 486–508 (QAQESSLSKEQQTRKSKNKMFEF) are disordered. Basic residues predominate over residues 499–508 (RKSKNKMFEF).

Its subcellular location is the nucleus. Its function is as follows. Transcription repressor. The protein is Zinc finger CCCH-type with G patch domain-containing protein of Drosophila virilis (Fruit fly).